Reading from the N-terminus, the 298-residue chain is Lipoyl synthase (298 aa).

[4Fe-4S] cluster-binding residues include Cys40, Cys45, Cys51, Cys67, Cys71, Cys74, and Ser280. The Radical SAM core domain maps to 53–269; the sequence is AVRRTATFMI…KEIAMQKGFS (217 aa).

Belongs to the radical SAM superfamily. Lipoyl synthase family. [4Fe-4S] cluster serves as cofactor.

The protein localises to the cytoplasm. It carries out the reaction [[Fe-S] cluster scaffold protein carrying a second [4Fe-4S](2+) cluster] + N(6)-octanoyl-L-lysyl-[protein] + 2 oxidized [2Fe-2S]-[ferredoxin] + 2 S-adenosyl-L-methionine + 4 H(+) = [[Fe-S] cluster scaffold protein] + N(6)-[(R)-dihydrolipoyl]-L-lysyl-[protein] + 4 Fe(3+) + 2 hydrogen sulfide + 2 5'-deoxyadenosine + 2 L-methionine + 2 reduced [2Fe-2S]-[ferredoxin]. It functions in the pathway protein modification; protein lipoylation via endogenous pathway; protein N(6)-(lipoyl)lysine from octanoyl-[acyl-carrier-protein]. Functionally, catalyzes the radical-mediated insertion of two sulfur atoms into the C-6 and C-8 positions of the octanoyl moiety bound to the lipoyl domains of lipoate-dependent enzymes, thereby converting the octanoylated domains into lipoylated derivatives. The polypeptide is Lipoyl synthase (Bacillus subtilis (strain 168)).